The primary structure comprises 545 residues: Glucans biosynthesis protein G (545 aa).

A signal peptide spans 1–34 (MVSLLRCQSFKPSSSLICSLALSAAFALSSSAFA). The tract at residues 38 to 60 (KPAENKPATPVVSPPKATAQPAN) is disordered.

This sequence belongs to the OpgD/OpgG family.

The protein resides in the periplasm. The protein operates within glycan metabolism; osmoregulated periplasmic glucan (OPG) biosynthesis. Its function is as follows. Involved in the biosynthesis of osmoregulated periplasmic glucans (OPGs). This Shewanella sp. (strain ANA-3) protein is Glucans biosynthesis protein G.